The chain runs to 241 residues: Sugar fermentation stimulation protein homolog (241 aa).

Belongs to the SfsA family.

This is Sugar fermentation stimulation protein homolog from Halorhodospira halophila (strain DSM 244 / SL1) (Ectothiorhodospira halophila (strain DSM 244 / SL1)).